Consider the following 195-residue polypeptide: Imidazoleglycerol-phosphate dehydratase (195 aa).

This sequence belongs to the imidazoleglycerol-phosphate dehydratase family.

The protein resides in the cytoplasm. The enzyme catalyses D-erythro-1-(imidazol-4-yl)glycerol 3-phosphate = 3-(imidazol-4-yl)-2-oxopropyl phosphate + H2O. It functions in the pathway amino-acid biosynthesis; L-histidine biosynthesis; L-histidine from 5-phospho-alpha-D-ribose 1-diphosphate: step 6/9. The chain is Imidazoleglycerol-phosphate dehydratase from Methanosphaerula palustris (strain ATCC BAA-1556 / DSM 19958 / E1-9c).